Here is a 216-residue protein sequence, read N- to C-terminus: UPF0502 protein Pfl01_3711 (216 aa).

This sequence belongs to the UPF0502 family.

The polypeptide is UPF0502 protein Pfl01_3711 (Pseudomonas fluorescens (strain Pf0-1)).